A 175-amino-acid polypeptide reads, in one-letter code: Nucleoside triphosphate/diphosphate phosphatase (175 aa).

Catalysis depends on R23, which acts as the Proton donor. Mg(2+)-binding residues include N87, D103, D105, D107, D120, and E123.

Belongs to the Ntdp family. Requires Mg(2+) as cofactor.

It catalyses the reaction a ribonucleoside 5'-triphosphate + H2O = a ribonucleoside 5'-diphosphate + phosphate + H(+). It carries out the reaction a ribonucleoside 5'-diphosphate + H2O = a ribonucleoside 5'-phosphate + phosphate + H(+). Has nucleoside phosphatase activity towards nucleoside triphosphates and nucleoside diphosphates. This is Nucleoside triphosphate/diphosphate phosphatase from Halalkalibacterium halodurans (strain ATCC BAA-125 / DSM 18197 / FERM 7344 / JCM 9153 / C-125) (Bacillus halodurans).